The primary structure comprises 585 residues: MFRTHTCGELRISDVNKQVKLSGWVQRSRKMGGMTFVDLRDRYGITQLVFNEEIDAELCERANKLGREFVIQIVGTVNERFSKNSHIPTGDIEIIVSELNILNSAITPPFTIEDNTDGGDDIRMKYRYLDLRRSAVRSNLELRHKMTIEVRSYLDKLGFLEVETPVLIGSTPEGARDFVVPSRMNPGQFYALPQSPQTLKQLLMVSGFDRYFQIAKCFRDEDLRADRQPEFTQIDCEMSFVEQEDVITTFEGMAKHLFKVIRNIELTGPFPRMPWSEAMRLYGSDKPDIRFGMQFVELMDILKGHGFSVFDNATYIGGICAEGAAGYTRKQLDALTEFVKKPQIGAKGMVYARIEADGTVKSSVDKFYIQEVLQQLKEAFGAKPGDLILILSGDDAMKTRKQLCELRLEMGNQLGLRDKNTFACLWVVDFPLFEWSEEEGRLMAMHHPFTSPKPEDIHLLDTNPAAVRANAYDMVINGVEVGGGSIRIHDSQLQNKMFELLGFTPERAQEQFGFLMNAFKFGAPPHGGLAYGLDRWVSLFAGLDSIRDCIAFPKNNSGRDVMLDAPAALDPSQLEELNLIVDIKE.

An L-aspartate-binding site is contributed by Glu-173. The segment at 197–200 is aspartate; sequence QTLK. Arg-219 is an L-aspartate binding site. Residues 219-221 and Gln-228 contribute to the ATP site; that span reads RDE. Position 446 (His-446) interacts with L-aspartate. Glu-480 serves as a coordination point for ATP. Arg-487 provides a ligand contact to L-aspartate. 532–535 is an ATP binding site; sequence GLDR.

The protein belongs to the class-II aminoacyl-tRNA synthetase family. Type 1 subfamily. Homodimer.

Its subcellular location is the cytoplasm. It catalyses the reaction tRNA(Asp) + L-aspartate + ATP = L-aspartyl-tRNA(Asp) + AMP + diphosphate. Its function is as follows. Catalyzes the attachment of L-aspartate to tRNA(Asp) in a two-step reaction: L-aspartate is first activated by ATP to form Asp-AMP and then transferred to the acceptor end of tRNA(Asp). The chain is Aspartate--tRNA ligase from Bacteroides fragilis (strain YCH46).